The sequence spans 252 residues: GPI alpha-1,4-mannosyltransferase I, stabilizing subunit (252 aa).

A signal peptide spans 1–22 (MAASALAWLLLWAAGLVGRLAA). Residues N97 and N209 are each glycosylated (N-linked (GlcNAc...) asparagine). Residues 225–245 (VCSVTLLITVLCSTLILLAVF) traverse the membrane as a helical segment.

Belongs to the PIGX family. Part of the glycosylphosphatidylinositol-mannosyltransferase I complex that is composed of PIGM and PIGX. Interacts with PIGM; PIGX stabilizes PIGM.

The protein resides in the endoplasmic reticulum membrane. Its pathway is glycolipid biosynthesis; glycosylphosphatidylinositol-anchor biosynthesis. Its function is as follows. Stabilizing subunit of the glycosylphosphatidylinositol-mannosyltransferase I complex which catalyzes the transfer of the first mannose, via an alpha-1,4 bond from a dolichol-phosphate-mannose (Dol-P-Man) to the glucosaminyl acyl phosphatidylinositol (GlcN-(acyl)PI) intermediate to generate alpha-D-Man-(1-&gt;4)-alpha-D-GlcN-(1-&gt;6)-(1-radyl,2-acyl-sn-glycero-3-phospho)-2-acyl-inositol and participates in the sixth step of the glycosylphosphatidylinositol-anchor biosynthesis. Probably acts by stabilizing the mannosyltransferase PIGM. This Rattus norvegicus (Rat) protein is GPI alpha-1,4-mannosyltransferase I, stabilizing subunit.